The following is a 232-amino-acid chain: Ribosomal RNA small subunit methyltransferase G (232 aa).

Residues Gly75, Phe80, 126 to 127 (AE), and Arg143 each bind S-adenosyl-L-methionine.

Belongs to the methyltransferase superfamily. RNA methyltransferase RsmG family.

The protein resides in the cytoplasm. In terms of biological role, specifically methylates the N7 position of a guanine in 16S rRNA. The polypeptide is Ribosomal RNA small subunit methyltransferase G (Fusobacterium nucleatum subsp. nucleatum (strain ATCC 25586 / DSM 15643 / BCRC 10681 / CIP 101130 / JCM 8532 / KCTC 2640 / LMG 13131 / VPI 4355)).